The chain runs to 109 residues: V-type proton ATPase 16 kDa proteolipid subunit (109 aa).

The chain crosses the membrane as a helical span at residues 1–20; that stretch reads VPVVMAGVLGIYGLIIAVII. Over 21-39 the chain is Lumenal; the sequence is STGINPKAKPYYLFDGYAH. Residues 40-61 form a helical membrane-spanning segment; it reads LSSGLACGLAGLAAGMAIGIVG. Topologically, residues 62-73 are cytoplasmic; sequence DAGVRANAQQPK. A helical transmembrane segment spans residues 74–99; that stretch reads LFVGMILILIFAEALALYGLIVGIIL. Topologically, residues 100 to 109 are lumenal; the sequence is SSRAGQSRAD.

Belongs to the V-ATPase proteolipid subunit family. V-ATPase is a heteromultimeric enzyme composed of a peripheral catalytic V1 complex (main components: subunits A, B, C, D, E, and F) attached to an integral membrane V0 proton pore complex (main component: the proteolipid protein; which is present as a hexamer that forms the proton-conducting pore). As to expression, high expression in the mesocotyl tip of etiolated seedlings compared to the base.

It is found in the vacuole membrane. In terms of biological role, proton-conducting pore forming subunit of the membrane integral V0 complex of vacuolar ATPase. V-ATPase is responsible for acidifying a variety of intracellular compartments in eukaryotic cells. This Zea mays (Maize) protein is V-type proton ATPase 16 kDa proteolipid subunit.